Reading from the N-terminus, the 879-residue chain is Metabotropic glutamate receptor 3 (879 aa).

Positions 1–22 are cleaved as a signal peptide; sequence MKMLTRLQVLMLALFSKGFLVS. Residues 23 to 576 lie on the Extracellular side of the membrane; the sequence is LGDHNFMRRE…EDYIRWEDAW (554 aa). Cysteine 57 and cysteine 99 are disulfide-bonded. L-glutamate is bound by residues serine 151 and 172-174; that span reads AST. A glycan (N-linked (GlcNAc...) asparagine) is linked at asparagine 209. Tyrosine 222 serves as a coordination point for L-glutamate. Cystine bridges form between cysteine 240-cysteine 527, cysteine 361-cysteine 373, cysteine 412-cysteine 419, cysteine 509-cysteine 528, cysteine 513-cysteine 531, cysteine 534-cysteine 546, and cysteine 549-cysteine 562. Asparagine 292 is a glycosylation site (N-linked (GlcNAc...) asparagine). Position 301 (aspartate 301) interacts with L-glutamate. Residue lysine 389 participates in L-glutamate binding. Residues asparagine 414 and asparagine 439 are each glycosylated (N-linked (GlcNAc...) asparagine). The chain crosses the membrane as a helical span at residues 577–599; the sequence is AIGPVTIACLGFMCTCIVITVFI. Topologically, residues 600-613 are cytoplasmic; the sequence is KHNNTPLVKASGRE. A helical membrane pass occupies residues 614-634; sequence LCYILLFGVSLSYCMTFFFIA. The Extracellular segment spans residues 635-645; that stretch reads KPSPVICALRR. A helical transmembrane segment spans residues 646–664; sequence LGLGTSFAICYSALLTKTN. The Cytoplasmic segment spans residues 665–688; the sequence is CIARIFDGVKNGAQRPKFISPSSQ. Residues 689–709 traverse the membrane as a helical segment; that stretch reads VFICLGLILVQIVMVSVWLIL. Residues 710–734 lie on the Extracellular side of the membrane; sequence ETPGTRRYTLPEKRETVILKCNVKD. Residues 735 to 756 form a helical membrane-spanning segment; sequence SSMLISLTYDVVLVILCTVYAF. Residues 757 to 769 lie on the Cytoplasmic side of the membrane; it reads KTRKCPENFNEAK. The helical transmembrane segment at 770 to 792 threads the bilayer; the sequence is FIGFTMYTTCIIWLAFLPIFYVT. The Extracellular segment spans residues 793–802; sequence SSDYRVQTTT. The helical transmembrane segment at 803–828 threads the bilayer; the sequence is MCISVSLSGFVVLGCLFAPKVHIVLF. The Cytoplasmic segment spans residues 829–879; the sequence is QPQKNVVTHRLHLNRFSVSGTATTYSQSSASTYVPTVCNGREVLDSTTSSL.

The protein belongs to the G-protein coupled receptor 3 family. As to quaternary structure, interacts with TAMALIN.

It is found in the cell membrane. G-protein coupled receptor for glutamate. Ligand binding causes a conformation change that triggers signaling via guanine nucleotide-binding proteins (G proteins) and modulates the activity of down-stream effectors. Signaling inhibits adenylate cyclase activity. This chain is Metabotropic glutamate receptor 3 (Grm3), found in Mus musculus (Mouse).